We begin with the raw amino-acid sequence, 309 residues long: Putative S-adenosyl-L-methionine-dependent methyltransferase Mflv_0743 (309 aa).

S-adenosyl-L-methionine-binding positions include aspartate 134 and aspartate 163–leucine 164.

This sequence belongs to the UPF0677 family.

Functionally, exhibits S-adenosyl-L-methionine-dependent methyltransferase activity. This chain is Putative S-adenosyl-L-methionine-dependent methyltransferase Mflv_0743, found in Mycolicibacterium gilvum (strain PYR-GCK) (Mycobacterium gilvum (strain PYR-GCK)).